Reading from the N-terminus, the 120-residue chain is Large ribosomal subunit protein uL18 (120 aa).

The protein belongs to the universal ribosomal protein uL18 family. In terms of assembly, part of the 50S ribosomal subunit; part of the 5S rRNA/L5/L18/L25 subcomplex. Contacts the 5S and 23S rRNAs.

This is one of the proteins that bind and probably mediate the attachment of the 5S RNA into the large ribosomal subunit, where it forms part of the central protuberance. This chain is Large ribosomal subunit protein uL18, found in Herminiimonas arsenicoxydans.